The sequence spans 356 residues: D-amino-acid oxidase (356 aa).

Positions 1–17 are cleaved as a signal peptide; sequence MAKIVVIGAGVAGLTTA. Residues Ala9, Ser44, Gly48, and Asn50 each contribute to the FAD site. Phe54 lines the anthranilate pocket. Val171 lines the FAD pocket. Asn192 carries N-linked (GlcNAc...) asparagine glycosylation. Position 243 (Tyr243) interacts with anthranilate. Residue Tyr243 coordinates (R)-lactate. N-linked (GlcNAc...) asparagine glycosylation is present at Asn262. Positions 302, 329, 332, 333, and 334 each coordinate FAD. Residue Arg302 coordinates anthranilate. Arg302 is a (R)-lactate binding site.

Belongs to the DAMOX/DASOX family. The cofactor is FAD.

The protein localises to the peroxisome matrix. It catalyses the reaction a D-alpha-amino acid + O2 + H2O = a 2-oxocarboxylate + H2O2 + NH4(+). The enzyme catalyses D-alanine + O2 + H2O = pyruvate + H2O2 + NH4(+). It carries out the reaction D-serine + O2 + H2O = 3-hydroxypyruvate + H2O2 + NH4(+). The catalysed reaction is D-phenylalanine + O2 + H2O = 3-phenylpyruvate + H2O2 + NH4(+). It catalyses the reaction D-lysine + O2 + H2O = 6-amino-2-oxohexanoate + H2O2 + NH4(+). The enzyme catalyses D-tyrosine + O2 + H2O = 3-(4-hydroxyphenyl)pyruvate + H2O2 + NH4(+). It carries out the reaction D-methionine + O2 + H2O = 4-methylsulfanyl-2-oxobutanoate + H2O2 + NH4(+). The catalysed reaction is D-tryptophan + O2 + H2O = indole-3-pyruvate + H2O2 + NH4(+). It catalyses the reaction D-leucine + O2 + H2O = 4-methyl-2-oxopentanoate + H2O2 + NH4(+). The enzyme catalyses D-valine + O2 + H2O = 3-methyl-2-oxobutanoate + H2O2 + NH4(+). Its activity is regulated as follows. Inhibited by benzoate and hypochlorite. Functionally, catalyzes the oxidative deamination of D-amino acids with broad substrate specificity. Enables the organism to utilize D-amino acids as a source of nutrients. This chain is D-amino-acid oxidase, found in Trigonopsis variabilis (Yeast).